The primary structure comprises 966 residues: Catenin alpha-2 (966 aa).

Over residues 924–940 (PEKKPLVKREKPEEYQT) the composition is skewed to basic and acidic residues. Positions 924–952 (PEKKPLVKREKPEEYQTRVRRGSQKKHIS) are disordered. Over residues 941–951 (RVRRGSQKKHI) the composition is skewed to basic residues.

The protein belongs to the vinculin/alpha-catenin family.

Its subcellular location is the cell membrane. The protein localises to the cytoplasm. The protein resides in the cytoskeleton. It localises to the cell junction. It is found in the adherens junction. Its subcellular location is the cell projection. The protein localises to the axon. The protein resides in the nucleus. Functionally, may function as a linker between cadherin adhesion receptors and the cytoskeleton to regulate cell-cell adhesion and differentiation in the nervous system. This is Catenin alpha-2 (ctnna2) from Xenopus laevis (African clawed frog).